Here is a 398-residue protein sequence, read N- to C-terminus: Lymphocyte transmembrane adapter 1 (398 aa).

Topologically, residues 1 to 37 are extracellular; that stretch reads MDGVTPTLSTIRGRTLESSTLHVTPRSLDRNKDQITN. The helical; Signal-anchor for type III membrane protein transmembrane segment at 38–58 threads the bilayer; that stretch reads IFSGFAGLLAILLVVAVFCIL. The Cytoplasmic portion of the chain corresponds to 59–398; sequence WNWNKRKKRQ…GPGTQLLPDE (340 aa). Residue Tyr-193 is modified to Phosphotyrosine. Residues 228–261 are disordered; it reads TEERDEGCGDAGDCTSLYSPGAEDSDSLSNGEGS. Residues Tyr-268 and Tyr-294 each carry the phosphotyrosine modification. The disordered stretch occupies residues 298 to 330; that stretch reads PAADPSGSQQQAEKDVPSSNIGHVEDKTDDPGT. The segment covering 303–318 has biased composition (polar residues); it reads SGSQQQAEKDVPSSNI. Basic and acidic residues predominate over residues 320–329; sequence HVEDKTDDPG. A phosphotyrosine mark is found at Tyr-345 and Tyr-373. The interval 347 to 398 is disordered; that stretch reads DFQPFTQSEDSQMKHREEMSNEDSSDYENVLTAKLGGRDSEQGPGTQLLPDE.

When phosphorylated, interacts with GRB2, PIK3R1 and GRAP2. Post-translationally, phosphorylated on tyrosines by Syk, Lck or ZAP70 upon TCR or BCR activation; which leads to the recruitment of GRB2, PIK3R1 and GRAP2. In terms of tissue distribution, expressed in spleen, thymus, and peripheral blood leukocytes. Expressed in several B-, T-, NK and monocyte cell lines.

Its subcellular location is the cell membrane. In terms of biological role, negatively regulates TCR (T-cell antigen receptor)-mediated signaling in T-cells and BCR (B-cell antigen receptor)-mediated signaling in B-cells. The polypeptide is Lymphocyte transmembrane adapter 1 (LAX1) (Homo sapiens (Human)).